The primary structure comprises 185 residues: Ribosome-recycling factor (185 aa).

The protein belongs to the RRF family.

It localises to the cytoplasm. Responsible for the release of ribosomes from messenger RNA at the termination of protein biosynthesis. May increase the efficiency of translation by recycling ribosomes from one round of translation to another. In Aliivibrio fischeri (strain ATCC 700601 / ES114) (Vibrio fischeri), this protein is Ribosome-recycling factor.